A 194-amino-acid chain; its full sequence is Large ribosomal subunit protein uL10 (194 aa).

Residues 172–187 (EGGAAEAPAEAATEAP) show a composition bias toward low complexity. Positions 172–194 (EGGAAEAPAEAATEAPAEAEAES) are disordered.

It belongs to the universal ribosomal protein uL10 family. As to quaternary structure, part of the ribosomal stalk of the 50S ribosomal subunit. The N-terminus interacts with L11 and the large rRNA to form the base of the stalk. The C-terminus forms an elongated spine to which L12 dimers bind in a sequential fashion forming a multimeric L10(L12)X complex.

Forms part of the ribosomal stalk, playing a central role in the interaction of the ribosome with GTP-bound translation factors. The chain is Large ribosomal subunit protein uL10 from Rhodococcus erythropolis (strain PR4 / NBRC 100887).